A 165-amino-acid chain; its full sequence is Interferon gamma (165 aa).

The first 23 residues, 1 to 23 (MKYTSYILAFQLCIVLGSLGCYC), serve as a signal peptide directing secretion. A Pyrrolidone carboxylic acid modification is found at Gln-24. Residues Asn-48 and Asn-120 are each glycosylated (N-linked (GlcNAc...) asparagine).

Belongs to the type II (or gamma) interferon family. As to quaternary structure, homodimer. Interacts with IFNGR1 (via extracellular domain); this interaction promotes IFNGR1 dimerization.

The protein localises to the secreted. Functionally, type II interferon produced by immune cells such as T-cells and NK cells that plays crucial roles in antimicrobial, antiviral, and antitumor responses by activating effector immune cells and enhancing antigen presentation. Primarily signals through the JAK-STAT pathway after interaction with its receptor IFNGR1 to affect gene regulation. Upon IFNG binding, IFNGR1 intracellular domain opens out to allow association of downstream signaling components JAK2, JAK1 and STAT1, leading to STAT1 activation, nuclear translocation and transcription of IFNG-regulated genes. Many of the induced genes are transcription factors such as IRF1 that are able to further drive regulation of a next wave of transcription. Plays a role in class I antigen presentation pathway by inducing a replacement of catalytic proteasome subunits with immunoproteasome subunits. In turn, increases the quantity, quality, and repertoire of peptides for class I MHC loading. Increases the efficiency of peptide generation also by inducing the expression of activator PA28 that associates with the proteasome and alters its proteolytic cleavage preference. Up-regulates as well MHC II complexes on the cell surface by promoting expression of several key molecules such as cathepsins B/CTSB, H/CTSH, and L/CTSL. Participates in the regulation of hematopoietic stem cells during development and under homeostatic conditions by affecting their development, quiescence, and differentiation. In Papio anubis (Olive baboon), this protein is Interferon gamma (IFNG).